The primary structure comprises 574 residues: Glutamyl-tRNA(Gln) amidotransferase subunit B, mitochondrial (574 aa).

It belongs to the GatB/GatE family. GatB subfamily. Subunit of the heterotrimeric GatCAB amidotransferase (AdT) complex, composed of A, B and C subunits.

The protein resides in the mitochondrion. The catalysed reaction is L-glutamyl-tRNA(Gln) + L-glutamine + ATP + H2O = L-glutaminyl-tRNA(Gln) + L-glutamate + ADP + phosphate + H(+). Its function is as follows. Allows the formation of correctly charged Gln-tRNA(Gln) through the transamidation of misacylated Glu-tRNA(Gln) in the mitochondria. The reaction takes place in the presence of glutamine and ATP through an activated gamma-phospho-Glu-tRNA(Gln). This Phytophthora infestans (strain T30-4) (Potato late blight agent) protein is Glutamyl-tRNA(Gln) amidotransferase subunit B, mitochondrial.